Consider the following 558-residue polypeptide: Thermosome subunit alpha (558 aa).

The segment at 536–558 is disordered; it reads TEKGKKEGGEGAGAETPGAPSLE. Residues 548–558 show a composition bias toward low complexity; that stretch reads GAETPGAPSLE.

This sequence belongs to the TCP-1 chaperonin family. In terms of assembly, forms a Heterooligomeric complex of two stacked eight-membered rings.

Molecular chaperone; binds unfolded polypeptides in vitro, and has a weak ATPase activity. This chain is Thermosome subunit alpha (thsA), found in Sulfolobus acidocaldarius (strain ATCC 33909 / DSM 639 / JCM 8929 / NBRC 15157 / NCIMB 11770).